Reading from the N-terminus, the 377-residue chain is F-box protein At2g05970 (377 aa).

The F-box domain occupies 8–55 (ASWSELCPDVLRCVFELLSFSDLNRTRSVCSSWHSASRHCVPTQNQIP).

This Arabidopsis thaliana (Mouse-ear cress) protein is F-box protein At2g05970.